Consider the following 191-residue polypeptide: CASP-like protein 4C3 (191 aa).

Over Met1 to Asn29 the chain is Cytoplasmic. A helical transmembrane segment spans residues Gly30 to Met50. At Gly51–Arg72 the chain is on the extracellular side. The helical transmembrane segment at Tyr73–Val93 threads the bilayer. The Cytoplasmic portion of the chain corresponds to Tyr94–Asp116. The chain crosses the membrane as a helical span at residues Gln117–Leu137. Topologically, residues Gln138–Ala162 are extracellular. The chain crosses the membrane as a helical span at residues Ser163–Leu183. At Arg184 to Ser191 the chain is on the cytoplasmic side.

It belongs to the Casparian strip membrane proteins (CASP) family. Homodimer and heterodimers.

It is found in the cell membrane. The polypeptide is CASP-like protein 4C3 (Physcomitrium patens (Spreading-leaved earth moss)).